Here is a 749-residue protein sequence, read N- to C-terminus: Catalase-peroxidase 2 (749 aa).

Positions Met-1–Ala-27 are cleaved as a signal peptide. The tryptophyl-tyrosyl-methioninium (Trp-Tyr) (with M-255) cross-link spans Trp-107 to Tyr-229. The active-site Proton acceptor is His-108. Positions Tyr-229–Met-255 form a cross-link, tryptophyl-tyrosyl-methioninium (Tyr-Met) (with W-107). Position 270 (His-270) interacts with heme b.

The protein belongs to the peroxidase family. Peroxidase/catalase subfamily. In terms of assembly, homodimer or homotetramer. Heme b serves as cofactor. Post-translationally, formation of the three residue Trp-Tyr-Met cross-link is important for the catalase, but not the peroxidase activity of the enzyme.

It catalyses the reaction H2O2 + AH2 = A + 2 H2O. It carries out the reaction 2 H2O2 = O2 + 2 H2O. Functionally, bifunctional enzyme with both catalase and broad-spectrum peroxidase activity. This is Catalase-peroxidase 2 from Legionella pneumophila subsp. pneumophila (strain Philadelphia 1 / ATCC 33152 / DSM 7513).